Here is a 213-residue protein sequence, read N- to C-terminus: ATP synthase peripheral stalk subunit OSCP, mitochondrial (213 aa).

The N-terminal 23 residues, 1-23 (MATPAVSGLSRQVRCFSTSVVRP), are a transit peptide targeting the mitochondrion. An SIFI-degron motif is present at residues 5–23 (AVSGLSRQVRCFSTSVVRP). Lysine 54, lysine 60, lysine 70, and lysine 73 each carry N6-acetyllysine. Lysine 90 carries the post-translational modification N6-succinyllysine. N6-acetyllysine; alternate is present on residues lysine 158 and lysine 162. Lysine 158 and lysine 162 each carry N6-succinyllysine; alternate. 3 positions are modified to N6-acetyllysine: lysine 172, lysine 176, and lysine 192. N6-succinyllysine is present on lysine 199.

This sequence belongs to the ATPase delta chain family. As to quaternary structure, component of the ATP synthase complex composed at least of ATP5F1A/subunit alpha, ATP5F1B/subunit beta, ATP5MC1/subunit c (homooctomer), MT-ATP6/subunit a, MT-ATP8/subunit 8, ATP5ME/subunit e, ATP5MF/subunit f, ATP5MG/subunit g, ATP5MK/subunit k, ATP5MJ/subunit j, ATP5F1C/subunit gamma, ATP5F1D/subunit delta, ATP5F1E/subunit epsilon, ATP5PF/subunit F6, ATP5PB/subunit b, ATP5PD/subunit d, ATP5PO/subunit OSCP. ATP synthase complex consists of a soluble F(1) head domain (subunits alpha(3) and beta(3)) - the catalytic core - and a membrane F(0) domain - the membrane proton channel (subunits c, a, 8, e, f, g, k and j). These two domains are linked by a central stalk (subunits gamma, delta, and epsilon) rotating inside the F1 region and a stationary peripheral stalk (subunits F6, b, d, and OSCP). Post-translationally, acetylation at Lys-162 decreases ATP production. Deacetylated by SIRT3. In response to mitochondrial stress, the precursor protein is ubiquitinated by the SIFI complex in the cytoplasm before mitochondrial import, leading to its degradation. Within the SIFI complex, UBR4 initiates ubiquitin chain that are further elongated or branched by KCMF1.

It is found in the mitochondrion. It localises to the mitochondrion inner membrane. In terms of biological role, subunit OSCP, of the mitochondrial membrane ATP synthase complex (F(1)F(0) ATP synthase or Complex V) that produces ATP from ADP in the presence of a proton gradient across the membrane which is generated by electron transport complexes of the respiratory chain. ATP synthase complex consist of a soluble F(1) head domain - the catalytic core - and a membrane F(1) domain - the membrane proton channel. These two domains are linked by a central stalk rotating inside the F(1) region and a stationary peripheral stalk. During catalysis, ATP synthesis in the catalytic domain of F(1) is coupled via a rotary mechanism of the central stalk subunits to proton translocation. In vivo, can only synthesize ATP although its ATP hydrolase activity can be activated artificially in vitro. Part of the complex F(0) domain. Part of the complex F(0) domain and the peripheric stalk, which acts as a stator to hold the catalytic alpha(3)beta(3) subcomplex and subunit a/ATP6 static relative to the rotary elements. This chain is ATP synthase peripheral stalk subunit OSCP, mitochondrial, found in Pongo abelii (Sumatran orangutan).